The sequence spans 672 residues: Glycerophosphocholine phosphodiesterase GPCPD1 (672 aa).

The CBM20 domain occupies 1–113 (MTPSQVTFEI…IIIDDGQFGI (113 aa)). Residues Arg-68 and 86 to 87 (HK) contribute to the substrate site. Ser-175 carries the post-translational modification Phosphoserine. The GP-PDE domain occupies 318–618 (PLDVGHRGAG…DRIYDWMPEQ (301 aa)). Tyr-608 is modified (phosphotyrosine).

It belongs to the glycerophosphoryl diester phosphodiesterase family.

The protein localises to the cytoplasm. The protein resides in the cytosol. The enzyme catalyses sn-glycerol 3-phosphocholine + H2O = sn-glycerol 3-phosphate + choline + H(+). May be involved in the negative regulation of skeletal muscle differentiation, independently of its glycerophosphocholine phosphodiesterase activity. This is Glycerophosphocholine phosphodiesterase GPCPD1 (Gpcpd1) from Rattus norvegicus (Rat).